The primary structure comprises 343 residues: Fructose-bisphosphate aldolase (343 aa).

D-glyceraldehyde 3-phosphate is bound at residue serine 53. Aspartate 95 functions as the Proton donor in the catalytic mechanism. Residues histidine 96, aspartate 131, glutamate 161, and histidine 212 each contribute to the Zn(2+) site. Residue glycine 213 participates in dihydroxyacetone phosphate binding. Histidine 252 lines the Zn(2+) pocket. Dihydroxyacetone phosphate is bound by residues 253–255 (GGS) and 274–277 (NIDT).

It belongs to the class II fructose-bisphosphate aldolase family. The cofactor is Zn(2+).

The catalysed reaction is beta-D-fructose 1,6-bisphosphate = D-glyceraldehyde 3-phosphate + dihydroxyacetone phosphate. It participates in carbohydrate degradation; glycolysis; D-glyceraldehyde 3-phosphate and glycerone phosphate from D-glucose: step 4/4. Its function is as follows. Catalyzes the aldol condensation of dihydroxyacetone phosphate (DHAP or glycerone-phosphate) with glyceraldehyde 3-phosphate (G3P) to form fructose 1,6-bisphosphate (FBP) in gluconeogenesis and the reverse reaction in glycolysis. The sequence is that of Fructose-bisphosphate aldolase (fba) from Streptomyces coelicolor (strain ATCC BAA-471 / A3(2) / M145).